We begin with the raw amino-acid sequence, 363 residues long: S-adenosylmethionine:tRNA ribosyltransferase-isomerase (363 aa).

This sequence belongs to the QueA family. In terms of assembly, monomer.

The protein localises to the cytoplasm. The enzyme catalyses 7-aminomethyl-7-carbaguanosine(34) in tRNA + S-adenosyl-L-methionine = epoxyqueuosine(34) in tRNA + adenine + L-methionine + 2 H(+). The protein operates within tRNA modification; tRNA-queuosine biosynthesis. Transfers and isomerizes the ribose moiety from AdoMet to the 7-aminomethyl group of 7-deazaguanine (preQ1-tRNA) to give epoxyqueuosine (oQ-tRNA). This Synechococcus sp. (strain RCC307) protein is S-adenosylmethionine:tRNA ribosyltransferase-isomerase.